A 358-amino-acid polypeptide reads, in one-letter code: MYLSRLPPRSIPCRSINQISRVVARSSKSRLEFVGSYQNSLTTNQTRCLRPFSSTSRSQLRDYFPEADHEHIKKTEAAWPHPNYPKEQMLTNISYAHRTPKDFSDRIALYLVRFLRFSTDLATGYKHDPVTITENGEKVLKKPYRMSERKWLIRMVFLESVAGVPGMVAGMLRHLHSLRRLKRDNGWIETLLEEAYNERMHLLTFLKMAKPGWFMKFMIIGAQGVFFNSMFLSYLISPRTCHRFVAYLEEEAVLTYSTAIQDIEAGLLPKWTSPEFRIPDLAVQYWKIPEGNRTMRDLLLYIRADEAKHREVNHTLGNLDQNEDPNPFVSEYRDKAAPHPSKGIEHIRPTGWERNEII.

The chain crosses the membrane as a helical span at residues 152–172; it reads LIRMVFLESVAGVPGMVAGML. Glutamate 159, glutamate 198, and histidine 201 together coordinate Fe cation. The chain crosses the membrane as a helical span at residues 217–237; the sequence is FMIIGAQGVFFNSMFLSYLIS. The Fe cation site is built by glutamate 249, glutamate 250, glutamate 306, and histidine 309.

The protein belongs to the alternative oxidase family. Requires Fe cation as cofactor.

It is found in the mitochondrion inner membrane. Functionally, catalyzes cyanide-resistant oxygen consumption. May increase respiration when the cytochrome respiratory pathway is restricted, or in response to low temperatures. The sequence is that of Alternative oxidase, mitochondrial from Blumeria graminis (Powdery mildew).